The following is a 234-amino-acid chain: 1-(5-phosphoribosyl)-5-[(5-phosphoribosylamino)methylideneamino] imidazole-4-carboxamide isomerase (234 aa).

Asp-9 acts as the Proton acceptor in catalysis. Residue Asp-131 is the Proton donor of the active site.

The protein belongs to the HisA/HisF family.

Its subcellular location is the cytoplasm. The enzyme catalyses 1-(5-phospho-beta-D-ribosyl)-5-[(5-phospho-beta-D-ribosylamino)methylideneamino]imidazole-4-carboxamide = 5-[(5-phospho-1-deoxy-D-ribulos-1-ylimino)methylamino]-1-(5-phospho-beta-D-ribosyl)imidazole-4-carboxamide. It participates in amino-acid biosynthesis; L-histidine biosynthesis; L-histidine from 5-phospho-alpha-D-ribose 1-diphosphate: step 4/9. The protein is 1-(5-phosphoribosyl)-5-[(5-phosphoribosylamino)methylideneamino] imidazole-4-carboxamide isomerase of Staphylococcus epidermidis (strain ATCC 12228 / FDA PCI 1200).